Consider the following 504-residue polypeptide: L-carnitine/gamma-butyrobetaine antiporter (504 aa).

Helical transmembrane passes span 8-28, 51-71, 92-112, 143-163, 195-215, 231-251, 263-283, 315-335, 347-367, 403-423, 446-466, and 475-495; these read AGIE…LCWL, WGWA…WLVF, IFMM…SIEI, GPLP…FFFV, FYLV…TPLV, LDAI…AFGL, TYLS…SFIV, AWTV…SIFL, LCLG…TYSG, LSTA…VTLI, LLVR…LLAL, and AIIA…LSFI.

This sequence belongs to the BCCT transporter (TC 2.A.15) family. CaiT subfamily. In terms of assembly, homotrimer.

The protein localises to the cell inner membrane. The catalysed reaction is 4-(trimethylamino)butanoate(in) + (R)-carnitine(out) = 4-(trimethylamino)butanoate(out) + (R)-carnitine(in). Its pathway is amine and polyamine metabolism; carnitine metabolism. In terms of biological role, catalyzes the exchange of L-carnitine for gamma-butyrobetaine. In Proteus sp. (strain LE138), this protein is L-carnitine/gamma-butyrobetaine antiporter.